Here is a 326-residue protein sequence, read N- to C-terminus: Zona pellucida-binding protein 2 (326 aa).

An N-terminal signal peptide occupies residues 1–19 (MLAWALLYAVLWSLAGVGS). 3 N-linked (GlcNAc...) asparagine glycosylation sites follow: N86, N220, and N256.

This sequence belongs to the zona pellucida-binding protein Sp38 family. N-glycosylated. Expressed specifically in male germ cells.

The protein resides in the cytoplasmic vesicle. The protein localises to the secretory vesicle. It is found in the acrosome. It localises to the secreted. Is implicated in sperm-oocyte interaction during fertilization. In Mus musculus (Mouse), this protein is Zona pellucida-binding protein 2 (Zpbp2).